A 136-amino-acid polypeptide reads, in one-letter code: Large ribosomal subunit protein uL22 (136 aa).

Belongs to the universal ribosomal protein uL22 family. Part of the 50S ribosomal subunit.

This protein binds specifically to 23S rRNA; its binding is stimulated by other ribosomal proteins, e.g. L4, L17, and L20. It is important during the early stages of 50S assembly. It makes multiple contacts with different domains of the 23S rRNA in the assembled 50S subunit and ribosome. In terms of biological role, the globular domain of the protein is located near the polypeptide exit tunnel on the outside of the subunit, while an extended beta-hairpin is found that lines the wall of the exit tunnel in the center of the 70S ribosome. This is Large ribosomal subunit protein uL22 from Bacteroides thetaiotaomicron (strain ATCC 29148 / DSM 2079 / JCM 5827 / CCUG 10774 / NCTC 10582 / VPI-5482 / E50).